The following is a 64-amino-acid chain: Large ribosomal subunit protein uL30 (64 aa).

It belongs to the universal ribosomal protein uL30 family. In terms of assembly, part of the 50S ribosomal subunit.

In Bdellovibrio bacteriovorus (strain ATCC 15356 / DSM 50701 / NCIMB 9529 / HD100), this protein is Large ribosomal subunit protein uL30.